The following is a 225-amino-acid chain: uncharacterized protein (225 aa).

6 consecutive transmembrane segments (helical) span residues 25-45 (MMLA…IPFL), 57-77 (VFLI…ITVA), 83-103 (FIWD…NFAI), 109-129 (LYFH…SLAT), 135-155 (LLTT…FGYV), and 187-207 (IFAL…LIGV).

Its subcellular location is the cell membrane. This is an uncharacterized protein from Mycoplasma pneumoniae (strain ATCC 29342 / M129 / Subtype 1) (Mycoplasmoides pneumoniae).